A 204-amino-acid polypeptide reads, in one-letter code: Tumor protein D53 (204 aa).

The interval 1 to 20 (MEAQAQGLLETEPLQGTDED) is disordered. Residues 22 to 73 (VASADFSSMLSEEEKEELKAELVQLEDEITTLRQVLSAKERHLVEIKQKLGM) adopt a coiled-coil conformation. Phosphoserine occurs at positions 29, 86, 122, and 131. Residue Arg-133 is modified to Omega-N-methylarginine. Phosphothreonine is present on Thr-146. A phosphoserine mark is found at Ser-149 and Ser-174.

Belongs to the TPD52 family. In terms of assembly, forms a homodimer or heterodimer with other members of the family.

The polypeptide is Tumor protein D53 (TPD52L1) (Homo sapiens (Human)).